Reading from the N-terminus, the 214-residue chain is Phosphatidylserine decarboxylase proenzyme (214 aa).

The active-site Schiff-base intermediate with substrate; via pyruvic acid is Ser182. Pyruvic acid (Ser); by autocatalysis is present on Ser182.

The protein belongs to the phosphatidylserine decarboxylase family. PSD-A subfamily. Heterodimer of a large membrane-associated beta subunit and a small pyruvoyl-containing alpha subunit. Pyruvate is required as a cofactor. In terms of processing, is synthesized initially as an inactive proenzyme. Formation of the active enzyme involves a self-maturation process in which the active site pyruvoyl group is generated from an internal serine residue via an autocatalytic post-translational modification. Two non-identical subunits are generated from the proenzyme in this reaction, and the pyruvate is formed at the N-terminus of the alpha chain, which is derived from the carboxyl end of the proenzyme. The post-translation cleavage follows an unusual pathway, termed non-hydrolytic serinolysis, in which the side chain hydroxyl group of the serine supplies its oxygen atom to form the C-terminus of the beta chain, while the remainder of the serine residue undergoes an oxidative deamination to produce ammonia and the pyruvoyl prosthetic group on the alpha chain.

It localises to the cell membrane. It carries out the reaction a 1,2-diacyl-sn-glycero-3-phospho-L-serine + H(+) = a 1,2-diacyl-sn-glycero-3-phosphoethanolamine + CO2. Its pathway is phospholipid metabolism; phosphatidylethanolamine biosynthesis; phosphatidylethanolamine from CDP-diacylglycerol: step 2/2. Catalyzes the formation of phosphatidylethanolamine (PtdEtn) from phosphatidylserine (PtdSer). This is Phosphatidylserine decarboxylase proenzyme from Solidesulfovibrio magneticus (strain ATCC 700980 / DSM 13731 / RS-1) (Desulfovibrio magneticus).